A 1110-amino-acid chain; its full sequence is Envelopment polyprotein (1110 aa).

Residues 1 to 8 (MALKETDA) constitute a propeptide that is removed on maturation. At 1–290 (MALKETDAKI…KYSKNIYKQT (290 aa)) the chain is on the lumenal side. The Cell attachment site motif lies at 14–16 (RGD). N-linked (GlcNAc...) asparagine; by host glycosylation is found at N46 and N92. 2 disulfide bridges follow: C90–C121 and C98–C132. The segment at 153–171 (IDNKRKLSIGTKFYIIESL) is non-covalent dimerization. N-linked (GlcNAc...) asparagine; by host glycosylation is present at N186. The cysteines at positions 200 and 261 are disulfide-linked. Residues 291–342 (ACINFSWFRLIMIALIVYFPIRYLVNKTSKTLFYGYDLLGLITYPILLLINY) traverse the membrane as a helical segment. The Cytoplasmic segment spans residues 343-459 (LWSYFPLKCK…VPGCDRFVTN (117 aa)). The Lumenal segment spans residues 460 to 1044 (RYDKCPEKDQ…HFGSFFDTVR (585 aa)). 3 N-linked (GlcNAc...) asparagine; by host glycosylation sites follow: N566, N582, and N957. The chain crosses the membrane as a helical span at residues 1045–1065 (VVLLILFVFALAYLCSIVATM). Over 1066-1110 (CRGYVRNKSYKTKYIEDTNDYSLVSTSSGKDTITRRRPPLDFSGI) the chain is Cytoplasmic. The disordered stretch occupies residues 1091–1110 (TSSGKDTITRRRPPLDFSGI).

The protein belongs to the tospovirus envelope glycoprotein family. In terms of assembly, homodimer; disulfide-linked. Heterodimer with Glycoprotein C. Interacts with nucleoprotein. As to quaternary structure, heterodimer with Glycoprotein N. Interacts with nucleoprotein. Specific enzymatic cleavages in vivo yield mature proteins including Glycoprotein N and Glycoprotein C. In terms of processing, glycosylated with O-linked glycans. Glycosylation is essential for proper subcellular location. Post-translationally, cleaved at acidic pH.

The protein resides in the virion membrane. Its subcellular location is the host Golgi apparatus membrane. The protein localises to the host endoplasmic reticulum membrane. Functionally, forms the spikes present at the surface of the virion together with Glycoprotein C. They are able to attach the virion to a cell receptor and to promote fusion of membranes after endocytosis of the virion. Plays a role in virus binding and/or entry into the vector midgut. Its function is as follows. Forms the spikes present at the surface of the virion together with Glycoprotein N. They are able to attach the virion to a cell receptor and to promote fusion of membranes after endocytosis of the virion. Probable class II fusion protein. The sequence is that of Envelopment polyprotein (GP) from Impatiens necrotic spot virus (INSV).